A 529-amino-acid polypeptide reads, in one-letter code: MPTFVDRVVLHATAGDGGHGCASIHREKFKPLGGPDGGDGGRGGDVRLVVDPSVTTLLDFHFHPHQRASRGRPGQGSNRHGADGADLVLPVPDGTVVLTEDGEQIIDLVGPGSAFVLARGGRGGRGNAALASARRKAPGFAELGEPGEQLDAVLELKTVADVALVGFPSAGKSSLVSVLSAAKPKIADYPFTTLVPNLGVAQAGDRPPYTVADVPGLIPGASEGRGLGLEFLRHIERCSVIVHVLDCATLEPGRDPMTDLDVIEAELAAYSADLSDRPRLVVLNKIDVPDAAELAELVAPELRARDLAVFAVSTATRRGVHALSLALADLVAQHRAAAPARAATRIVLRPRAVNEPDFTVRPLGDGFLITGSKPERWVRQTDFTNDEAIGFLADRLARLGVEKELARLGATAGAEVTIGEVTFDWEPTLSGGGLGNGGLGVDDHPGGDGLAETGPGGRGPAGTAASGAAPSPGRGGDTGSSVSLGPRGTDDRLRASVRLTRAERMARRAAAVVDPAVRGEPAGRGEEEG.

The 158-residue stretch at 2–159 (PTFVDRVVLH…LDAVLELKTV (158 aa)) folds into the Obg domain. Residues 62-86 (FHPHQRASRGRPGQGSNRHGADGAD) are disordered. Residues 160 to 332 (ADVALVGFPS…LSLALADLVA (173 aa)) enclose the OBG-type G domain. GTP contacts are provided by residues 166-173 (GFPSAGKS), 191-195 (FTTLV), 213-216 (DVPG), 284-287 (NKID), and 313-315 (STA). Residues S173 and T193 each coordinate Mg(2+). Residues 350-427 (PRAVNEPDFT…IGEVTFDWEP (78 aa)) enclose the OCT domain. Disordered regions lie at residues 434 to 494 (LGNG…DRLR) and 506 to 529 (ARRA…EEEG). Low complexity-rich tracts occupy residues 461–472 (AGTAASGAAPSP) and 508–520 (RAAA…VRGE).

This sequence belongs to the TRAFAC class OBG-HflX-like GTPase superfamily. OBG GTPase family. Monomer. Mg(2+) serves as cofactor.

The protein resides in the cytoplasm. An essential GTPase which binds GTP, GDP and possibly (p)ppGpp with moderate affinity, with high nucleotide exchange rates and a fairly low GTP hydrolysis rate. Plays a role in control of the cell cycle, stress response, ribosome biogenesis and in those bacteria that undergo differentiation, in morphogenesis control. The sequence is that of GTPase Obg from Frankia casuarinae (strain DSM 45818 / CECT 9043 / HFP020203 / CcI3).